Here is a 311-residue protein sequence, read N- to C-terminus: MIKVVFFGTSTLSKCCLEAIFQDPEFVVCGVVTQPDKVNERNNKINFSAVKQFCIENNIPCFQPEKNIQIKTELAQLQADIGVCVAFGQYIHNDIINLFPYKIANLHPSKLPLLRGGAPLHWTIINGFTTSSLSVIELVQKMDAGPIWKQKDFKVNPNWNTGDLFEYVQTHAPQFLIQCLKEIVSGKSQWKEQINPPTFGLNIKKEQERLDLNLEPKAFINWVKGLAPKPGGWLEFEGQNIKILQATYLGKMTSTTAVGQITKISKQGIEIALANDEIVLLQIIQIPGKRAMGVSEIINGKHPFAEGKFFH.

(6S)-5,6,7,8-tetrahydrofolate is bound at residue 109-112 (SKLP).

The protein belongs to the Fmt family.

The enzyme catalyses L-methionyl-tRNA(fMet) + (6R)-10-formyltetrahydrofolate = N-formyl-L-methionyl-tRNA(fMet) + (6S)-5,6,7,8-tetrahydrofolate + H(+). In terms of biological role, attaches a formyl group to the free amino group of methionyl-tRNA(fMet). The formyl group appears to play a dual role in the initiator identity of N-formylmethionyl-tRNA by promoting its recognition by IF2 and preventing the misappropriation of this tRNA by the elongation apparatus. The sequence is that of Methionyl-tRNA formyltransferase (fmt) from Mycoplasma pneumoniae (strain ATCC 29342 / M129 / Subtype 1) (Mycoplasmoides pneumoniae).